The following is a 240-amino-acid chain: 1-(5-phosphoribosyl)-5-[(5-phosphoribosylamino)methylideneamino] imidazole-4-carboxamide isomerase (240 aa).

Aspartate 8 acts as the Proton acceptor in catalysis. Catalysis depends on aspartate 130, which acts as the Proton donor.

This sequence belongs to the HisA/HisF family.

The protein resides in the cytoplasm. It carries out the reaction 1-(5-phospho-beta-D-ribosyl)-5-[(5-phospho-beta-D-ribosylamino)methylideneamino]imidazole-4-carboxamide = 5-[(5-phospho-1-deoxy-D-ribulos-1-ylimino)methylamino]-1-(5-phospho-beta-D-ribosyl)imidazole-4-carboxamide. It participates in amino-acid biosynthesis; L-histidine biosynthesis; L-histidine from 5-phospho-alpha-D-ribose 1-diphosphate: step 4/9. The sequence is that of 1-(5-phosphoribosyl)-5-[(5-phosphoribosylamino)methylideneamino] imidazole-4-carboxamide isomerase from Flavobacterium johnsoniae (strain ATCC 17061 / DSM 2064 / JCM 8514 / BCRC 14874 / CCUG 350202 / NBRC 14942 / NCIMB 11054 / UW101) (Cytophaga johnsonae).